The following is a 234-amino-acid chain: Glucosamine-6-phosphate deaminase (234 aa).

Catalysis depends on D62, which acts as the Proton acceptor; for enolization step. The For ring-opening step role is filled by N128. Residue H130 is the Proton acceptor; for ring-opening step of the active site. The For ring-opening step role is filled by E135.

The protein belongs to the glucosamine/galactosamine-6-phosphate isomerase family. NagB subfamily.

It catalyses the reaction alpha-D-glucosamine 6-phosphate + H2O = beta-D-fructose 6-phosphate + NH4(+). It participates in amino-sugar metabolism; N-acetylneuraminate degradation; D-fructose 6-phosphate from N-acetylneuraminate: step 5/5. In terms of biological role, catalyzes the reversible isomerization-deamination of glucosamine 6-phosphate (GlcN6P) to form fructose 6-phosphate (Fru6P) and ammonium ion. The sequence is that of Glucosamine-6-phosphate deaminase from Ligilactobacillus salivarius (strain UCC118) (Lactobacillus salivarius).